The sequence spans 192 residues: Probable Brix domain-containing ribosomal biogenesis protein (192 aa).

The Brix domain maps to 2-191; sequence RPAAITTSQR…DFRTKDERMK (190 aa).

In terms of biological role, probably involved in the biogenesis of the ribosome. The chain is Probable Brix domain-containing ribosomal biogenesis protein from Methanopyrus kandleri (strain AV19 / DSM 6324 / JCM 9639 / NBRC 100938).